A 759-amino-acid polypeptide reads, in one-letter code: MPAFSCAFPGCRRDLLVIVLVVFVGIGLPIEASAPAYQSHGTEGSHLTNITNTKKAFPVLAVNYEHVRKPFEIALWILLALLMKLGFHLIPRLSAVVPESCLLIVVGLLVGGLIKVIGEEPPVLDSQLFFLCLLPPIILDAGYFLPIRPFTENVGTILVFAVIGTLWNAFFMGGLLYALCQIESVGLSGVDLLACLLFGSIVSAVDPVAVLAVFEEIHINELVHILVFGESLLNDAVTVVLYNLFEEFSKVGTVTVLDVFLGVVCFFVVSLGGVLVGAIYGFLAAFTSRFTSHTRVIEPLFVFLYSYMAYLSSEMFHLSGIMALIACGVVMRPYVEANISHKSYTTIKYFLKMWSSVSETLIFIFLGVSTVAGPHAWNWTFVITTVILCLVSRVLGVIGLTFIINKFRIVKLTKKDQFIVAYGGLRGAIAFSLGYLLSNSHQMRNLFLTAIITVIFFTVFVQGMTIRPLVELLAVKKKKESKPSINEEIHTEFLDHLLTGVEGVCGHYGHYHWKEKLNRFNKTYVKRWLIAGENFKEPELIAFYRKMELKQAIMMVESGQLPSVLPSTISMQNIQPRAIPRVSKKREEEIRRILRANLQNNKQKMRSRSYSRHTLFDADEEDNVSEVRLRKTKMEMERRVSVMERRMSHYLTVPANRESPRPGVRRVRFESDNQVFSADSFPTVHFEQPSPPSTPDAVSLEEEEEEVPKRPSLKADIEGPRGNASDNHQGELDYQRLARCLSDPGPNKDKEDDDPFMSC.

Over 1–14 the chain is Cytoplasmic; it reads MPAFSCAFPGCRRD. Residues 15–34 traverse the membrane as a helical segment; it reads LLVIVLVVFVGIGLPIEASA. Residues 35–75 are Extracellular-facing; it reads PAYQSHGTEGSHLTNITNTKKAFPVLAVNYEHVRKPFEIAL. N49 carries N-linked (GlcNAc...) asparagine glycosylation. The helical transmembrane segment at 76–95 threads the bilayer; the sequence is WILLALLMKLGFHLIPRLSA. Residues 96-97 are Cytoplasmic-facing; that stretch reads VV. Residues 98–117 traverse the membrane as a helical segment; it reads PESCLLIVVGLLVGGLIKVI. Residues 118 to 122 lie on the Extracellular side of the membrane; that stretch reads GEEPP. A helical transmembrane segment spans residues 123-142; that stretch reads VLDSQLFFLCLLPPIILDAG. At 143–149 the chain is on the cytoplasmic side; it reads YFLPIRP. A helical membrane pass occupies residues 150-169; sequence FTENVGTILVFAVIGTLWNA. Over 170–195 the chain is Extracellular; the sequence is FFMGGLLYALCQIESVGLSGVDLLAC. A helical transmembrane segment spans residues 196–214; it reads LLFGSIVSAVDPVAVLAVF. Topologically, residues 215–225 are cytoplasmic; that stretch reads EEIHINELVHI. Residues 226 to 244 traverse the membrane as a helical segment; it reads LVFGESLLNDAVTVVLYNL. The Extracellular segment spans residues 245-261; the sequence is FEEFSKVGTVTVLDVFL. Residues 262-282 form a helical membrane-spanning segment; sequence GVVCFFVVSLGGVLVGAIYGF. At 283-311 the chain is on the cytoplasmic side; sequence LAAFTSRFTSHTRVIEPLFVFLYSYMAYL. Residues 312-330 form a helical membrane-spanning segment; the sequence is SSEMFHLSGIMALIACGVV. The Extracellular portion of the chain corresponds to 331–352; sequence MRPYVEANISHKSYTTIKYFLK. N338 carries N-linked (GlcNAc...) asparagine glycosylation. Residues 353–372 form a helical membrane-spanning segment; the sequence is MWSSVSETLIFIFLGVSTVA. Topologically, residues 373-376 are cytoplasmic; that stretch reads GPHA. The chain crosses the membrane as a helical span at residues 377 to 398; it reads WNWTFVITTVILCLVSRVLGVI. Residues 399-446 lie on the Extracellular side of the membrane; it reads GLTFIINKFRIVKLTKKDQFIVAYGGLRGAIAFSLGYLLSNSHQMRNL. Residues 447–467 traverse the membrane as a helical segment; sequence FLTAIITVIFFTVFVQGMTIR. Over 468 to 759 the chain is Cytoplasmic; the sequence is PLVELLAVKK…KEDDDPFMSC (292 aa). Phosphoserine; by PKA is present on residues S641 and S648. A disordered region spans residues 681–759; the sequence is FPTVHFEQPS…KEDDDPFMSC (79 aa). Positions 707–719 are enriched in basic and acidic residues; it reads VPKRPSLKADIEG.

Belongs to the monovalent cation:proton antiporter 1 (CPA1) transporter (TC 2.A.36) family. Activated by cAMP, protein kinase A and protein kinase C.

It localises to the basolateral cell membrane. Functionally, involved in pH regulation to eliminate acids generated by active metabolism or to counter adverse environmental conditions. Major proton extruding system driven by the inward sodium ion chemical gradient. This is Na(+)/H(+) exchanger beta from Oncorhynchus mykiss (Rainbow trout).